A 291-amino-acid chain; its full sequence is Neugrin (291 aa).

The signal sequence occupies residues 1–15; the sequence is MAVTLSLLLGGRVCA. 2 disordered regions span residues 26–48 and 155–270; these read GVAG…PEER and GSGN…DNFS. The residue at position 41 (Ser41) is a Phosphoserine. Asn158 and Asn186 each carry an N-linked (GlcNAc...) asparagine glycan. The segment covering 236 to 246 has biased composition (polar residues); it reads KYSSDSESPRG. Asn268 carries N-linked (GlcNAc...) asparagine glycosylation.

The protein belongs to the neugrin family. As to quaternary structure, forms a regulatory protein-RNA complex, consisting of RCC1L, NGRN, RPUSD3, RPUSD4, TRUB2, FASTKD2 and 16S mt-rRNA. Interacts with 16S mt-rRNA; this interaction is direct. As to expression, expressed at high levels in heart, brain and skeletal muscle. In brain, mainly expressed in neurons rather than glial cells.

The protein resides in the nucleus. It is found in the secreted. The protein localises to the mitochondrion membrane. Its function is as follows. Plays an essential role in mitochondrial ribosome biogenesis. As a component of a functional protein-RNA module, consisting of RCC1L, NGRN, RPUSD3, RPUSD4, TRUB2, FASTKD2 and 16S mitochondrial ribosomal RNA (16S mt-rRNA), controls 16S mt-rRNA abundance and is required for intra-mitochondrial translation of core subunits of the oxidative phosphorylation system. The chain is Neugrin from Homo sapiens (Human).